The following is a 448-amino-acid chain: Beclin-1 (448 aa).

Met1 is subject to N-acetylmethionine. Ser14 and Ser29 each carry phosphoserine. The segment at Thr47–Arg72 is disordered. A phosphoserine; by AMPK mark is found at Ser88, Ser91, and Ser94. Positions Thr106–Ser125 match the BH3 motif. Positions Leu110–Cys157 are interaction with BCL2 and BCL2L1 isoform Bcl-X(L). Residue Thr117 is modified to Phosphothreonine; by DAPK1. The stretch at Asp140–Val267 forms a coiled coil. Residues Asp243–Lys448 form an evolutionary conserved domain (ECD) region. Glycyl lysine isopeptide (Lys-Gly) (interchain with G-Cter in ubiquitin) cross-links involve residues Lys400 and Lys435. The tract at residues Trp423 to Lys448 is required for membrane-association.

Belongs to the beclin family. A homodimeric form is proposed to exist; this metastable form readily transits to ATG14- or UVRAG-containing complexes with BECN1:UVRAG being more stable than BECN1:ATG14. Component of the PI3K (PI3KC3/PI3K-III/class III phosphatidylinositol 3-kinase) complex the core of which is composed of the catalytic subunit PIK3C3, the regulatory subunit PIK3R4 and BECN1 associating with additional regulatory/auxiliary subunits to form alternative complex forms. Alternative complex forms containing a fourth regulatory subunit in a mutually exclusive manner are PI3K complex I (PI3KC3-C1) containing ATG14, and PI3K complex II (PI3KC3-C2) containing UVRAG. PI3KC3-C1 displays a V-shaped architecture with PIK3R4 serving as a bridge between PIK3C3 and the ATG14:BECN1 subcomplex. Both, PI3KC3-C1 and PI3KC3-C2, can associate with further regulatory subunits, such as RUBCN, SH3GLB1/Bif-1 and AMBRA1. PI3KC3-C1 probably associates with PIK3CB. Forms a complex with PPP2CA and AMBRA1; AMBRA1 and BECN1 components of the complex regulate MYC stability via different pathways. Component of the complex, at least composed of LRPPRC, BECN1 and BCL2; the interactions prevent BECN1 from forming an autophagy-inducing complex with PIK3C3. Interacts with AMBRA1, GOPC, GRID2. Interacts with BCL2 and BCL2L1 isoform Bcl-X(L); the interaction inhibits BECN1 function in promoting autophagy by interfering with the formation of the PI3K complex. Interacts with cytosolic HMGB1; inhibits the interaction of BECN1 and BCL2 leading to promotion of autophagy. Interacts with USP10, USP13, DAPK1, RAB39A. Interacts with SLAMF1. Interacts with the poly-Gln domain of ATXN3; the interaction causes deubiquitination at Lys-400 and stabilizes BECN1. Interacts with VMP1. Interacts with TRIM5; the interaction causes activation of BECN1 by causing its dissociation from its inhibitors BCL2 and TAB2. Interacts with active ULK1 (phosphorylated on 'Ser-317') and MEFV simultaneously. Interacts with WDR81 and WDR91; negatively regulates the PI3 kinase/PI3K activity associated with endosomal membranes. Interacts with LAPTM4B; competes with EGFR for LAPTM4B binding; regulates EGFR activity. Interacts with TRIM50. Interacts with TRIM16. Interacts with ATG14; this interaction is increased in the absence of TMEM39A. Interacts with WASHC1; preventing interaction with AMBRA1 and the DCX(AMBRA1) complex and subsequent ubiquitination. Interacts with TRIM17. Interacts with BCL2L10/BCL-B (via BH1 domain). Interacts with SH3BGRL. Interacts with IRGM; enhancing BECN1-interacting partners and influencing the composition of the BECN1 complex. Interacts with ARMC3. Interacts with LRPPRC. Phosphorylation at Thr-117 by DAPK1 reduces its interaction with BCL2 and BCL2L1 and promotes induction of autophagy. In response to autophagic stimuli, phosphorylated at serine residues by AMPK in an ATG14-dependent manner, and this phosphorylation is critical for maximally efficient autophagy. Post-translationally, polyubiquitinated by NEDD4, both with 'Lys-11'- and 'Lys-63'-linkages. 'Lys-11'-linked polyubiquitination leads to degradation and is enhanced when the stabilizing interaction partner VPS34 is depleted. Deubiquitinated by USP10 and USP13, leading to stabilize the PIK3C3/VPS34-containing complexes. Polyubiquitinated at Lys-400 with 'Lys-48'-linkages. 'Lys-48'-linked polyubiquitination of Lys-400 leads to degradation. Deubiquitinated by ATXN3, leading to stabilization. Ubiquitinated at Lys-435 via 'Lys-63'-linkage by the DCX(AMBRA1) complex, thereby increasing the association between BECN1 and PIK3C3 to promote PIK3C3 activity. 'Lys-48'-linked ubiquitination by RNF216 leads to proteasomal degradation and autophagy inhibition. In terms of processing, proteolytically processed by caspases including CASP8 and CASP3; the C-terminal fragments lack autophagy-inducing capacity and are proposed to induce apoptosis. Thus the cleavage is proposed to be an determinant to switch from autophagy to apoptosis pathways affecting cellular homeostasis including viral infections and survival of tumor cells.

The protein resides in the cytoplasm. Its subcellular location is the golgi apparatus. It localises to the trans-Golgi network membrane. The protein localises to the endosome membrane. It is found in the endoplasmic reticulum membrane. The protein resides in the mitochondrion membrane. Its subcellular location is the cytoplasmic vesicle. It localises to the autophagosome. The protein localises to the mitochondrion. It is found in the nucleus. Plays a central role in autophagy. Acts as a core subunit of the PI3K complex that mediates formation of phosphatidylinositol 3-phosphate; different complex forms are believed to play a role in multiple membrane trafficking pathways: PI3KC3-C1 is involved in initiation of autophagosomes and PI3KC3-C2 in maturation of autophagosomes and endocytosis. Involved in regulation of degradative endocytic trafficking and required for the abscission step in cytokinesis, probably in the context of PI3KC3-C2. Essential for the formation of PI3KC3-C2 but not PI3KC3-C1 PI3K complex forms. Involved in endocytosis. May play a role in antiviral host defense. Its function is as follows. Beclin-1-C 35 kDa localized to mitochondria can promote apoptosis; it induces the mitochondrial translocation of BAX and the release of proapoptotic factors. The chain is Beclin-1 (Becn1) from Rattus norvegicus (Rat).